Reading from the N-terminus, the 1363-residue chain is MSPKGVGHSKVEESAVQVAVRVRPLLPKEILHSHESCITSDPEERRVTLGNDRHFHCDFVFEDGSTQEEVYTNCVQPLIEAFFHGFNATVSAYGQTGSGKTYTIGEASISAFRDDEQGIIPRAVAEIFKLLDENDLIDFSVRVSYMEVYKEVFRDLLEVETASKDIHIREDERGNVVLCGVKECEVEGLDEVLSLLESGKTARHTGATQMNPHSSRSHTIFTVLMEQRRGGSRAANGSVQILSSKFHFVDLAGSERILKTGNTGERLKESIQINSGLLVLGNVIGALGDPKRKGTHIPYRDSKITRILKDSLGGNAKTLMIACISPSSSDFDESLNTLNYAKRARNIQNRATVNCRGEPDRIEGLELQIKALRRALENRQRSETRIIARSDPEKRLRPFEVDVRKLQAESAHYRTCTDSAYRLLTELQGEGTLNAGQILRVKEWLCGVEEERSGLTSASGLDSGIESSSTEDSTALKRRQAVLNNQDLVKEDWRGEREDYTSQLQAQIQQLEQENTDFLVALEDAMEQYKQQSDKLQEQQDLIAELHSLLAQPGGAGFLHLKQRPHTAPINSLLQTPDRLTPPCDSDVGRSLARQLDVGASVDSSSYSEQTQWDGTHGNTHCESSRKLNRDEDGHMQTTRDKRKSINVTWTKKDIAIPQGPFGGTRTALPQTLGLCHPLGMQFNRRTSNSSIGESSVWESVRGFGGEFCSDRGLLQAQQKIRELSITIRMKEELIKELVKTGKDAQAMNRQYSRKISELEAEAEQARVELTEAQKQLQELEVQGGRDAVDRSKAQECRRKIAAAQSKVQVLKQKQRDTAQLASLSAQSERRVQELERNVQNMKQQQDLLQRRLREESQQKRRLETEMQKGKHRVKELEIKNEQQQKILRIKTEEIAAFQRQRRSGSNGSVVSLEEQQKIEEQKRWLDEEMEKVLDQRRGLEDLEGELTKREEILAKKEALLWERSGLESKKLRSSQALSQDLLTLSSRIESLERELTERNGLLRSGSAQDSQQIRQEISNLRQEKELLLKQRVELDDKLRQGNLLSPEEERTLFQLDEAIEALDAAIEYKNEAITQRQRQLRASGSMLTQWEMNLMAKLTYLSASETRALLCKYFDKVVSLREEERRLQMALAELELRVEEQQNLVGWLEAALERQQLEADRRLTQQQKEHERNIQLLLQQCREQMDEGLAGRLRQYEGLIHNLSKELNFCKIANQELNIKLREMCGPVNLTGEQCKGLNCDSLLLAGAQSRVAEDVKPIIDAERVQKSREEMREPVNAPLPATWRRSSLPTEDQYTMEELRQRAACELPNNRIVQPGMNSTHWSGSTSLPVTRPRREPRRSSLNTAPLYSSSAIIDVRRNPV.

Residues 15–347 form the Kinesin motor domain; sequence AVQVAVRVRP…LNYAKRARNI (333 aa). 94-101 is an ATP binding site; it reads GQTGSGKT. 2 coiled-coil regions span residues 358-385 and 491-552; these read EPDR…SETR and EDWR…LLAQ. Over residues 603–622 the composition is skewed to polar residues; sequence DSSSYSEQTQWDGTHGNTHC. A disordered region spans residues 603–642; sequence DSSSYSEQTQWDGTHGNTHCESSRKLNRDEDGHMQTTRDK. Basic and acidic residues predominate over residues 623 to 640; it reads ESSRKLNRDEDGHMQTTR. Coiled-coil stretches lie at residues 714 to 1068 and 1116 to 1225; these read LLQA…AAIE and DKVV…LREM. Residues 1314-1346 are disordered; sequence IVQPGMNSTHWSGSTSLPVTRPRREPRRSSLNT. Residues 1318 to 1331 are compositionally biased toward polar residues; sequence GMNSTHWSGSTSLP.

The protein belongs to the TRAFAC class myosin-kinesin ATPase superfamily. Kinesin family. KIF27 subfamily. Binds microtubules. Interacts with gli1 and sufu.

The protein resides in the cytoplasm. It is found in the cytoskeleton. It localises to the cell projection. The protein localises to the cilium. Its function is as follows. Acts downstream of smo as an intracellular repressor of hedgehog signaling pathway, mainly through the suppression of gli1 activity. This negative regulatory effect is enhanced in conjunction with the suppressor of fused (sufu) protein. Positively regulates gli2a activity by promoting its dissociation from sufu. Involved in the regulation of microtubular dynamics. In Danio rerio (Zebrafish), this protein is Kinesin-like protein kif7 (kif7).